The following is a 110-amino-acid chain: NADH-quinone oxidoreductase subunit K (110 aa).

A run of 3 helical transmembrane segments spans residues 13–33 (LNHYLILSSLVFTIGMFGLFM), 41–61 (ILMSIELMLLAVNINFVAFSI), and 73–93 (IIILTVAAAETSIGLAILLIY).

Belongs to the complex I subunit 4L family. NDH-1 is composed of 14 different subunits. Subunits NuoA, H, J, K, L, M, N constitute the membrane sector of the complex.

The protein localises to the cell inner membrane. The catalysed reaction is a quinone + NADH + 5 H(+)(in) = a quinol + NAD(+) + 4 H(+)(out). Its function is as follows. NDH-1 shuttles electrons from NADH, via FMN and iron-sulfur (Fe-S) centers, to quinones in the respiratory chain. The immediate electron acceptor for the enzyme in this species is believed to be ubiquinone. Couples the redox reaction to proton translocation (for every two electrons transferred, four hydrogen ions are translocated across the cytoplasmic membrane), and thus conserves the redox energy in a proton gradient. This is NADH-quinone oxidoreductase subunit K from Rickettsia felis (strain ATCC VR-1525 / URRWXCal2) (Rickettsia azadi).